A 705-amino-acid chain; its full sequence is Forkhead box protein P1 (705 aa).

Over residues 1–19 (MMQESGSETKSNGSAIQNG) the composition is skewed to polar residues. The disordered stretch occupies residues 1 to 41 (MMQESGSETKSNGSAIQNGSSGGNHLLECGALRDTRSNGEA). Ser-113 bears the Phosphoserine mark. Disordered regions lie at residues 267–286 (HTAE…TSTC) and 291–326 (APSK…EHPH). Polar residues-rich tracts occupy residues 276 to 286 (NHSSLDLTSTC) and 291 to 311 (APSK…QLSV). A compositionally biased stretch (basic and acidic residues) spans 314–326 (PKRESLSHEEHPH). A Glycyl lysine isopeptide (Lys-Gly) (interchain with G-Cter in SUMO2) cross-link involves residue Lys-315. The C2H2-type zinc-finger motif lies at 334 to 359 (GVCKWPGCEAVCDDFPAFLKHLNSEH). Residues 376-397 (VQQLELQLAKDKERLQAMMTHL) are leucine-zipper. Residues Lys-400 and Lys-405 each participate in a glycyl lysine isopeptide (Lys-Gly) (interchain with G-Cter in SUMO2) cross-link. Positions 410–414 (PLNLV) are CTBP1-binding. Positions 418-431 (TLSKSASEASPQSL) are enriched in polar residues. The segment at 418–450 (TLSKSASEASPQSLPHTPTTPTAPLTPVTQGPS) is disordered. The span at 432-446 (PHTPTTPTAPLTPVT) shows a compositional bias: low complexity. A Glycyl lysine isopeptide (Lys-Gly) (interchain with G-Cter in SUMO2) cross-link involves residue Lys-470. Positions 493-583 (RPPFTYASLI…PQKISGNPSL (91 aa)) form a DNA-binding region, fork-head. The tract at residues 639-705 (EHTNSNESDS…EDEPVNEDME (67 aa)) is disordered. The span at 640–651 (HTNSNESDSSPG) shows a compositional bias: polar residues. Thr-681 is modified (phosphothreonine). Ser-686 is subject to Phosphoserine. A compositionally biased stretch (acidic residues) spans 695–705 (YEDEPVNEDME).

As to quaternary structure, forms homodimers and heterodimers with FOXP2 and FOXP4. Dimerization is required for DNA-binding. Self-associates. Interacts with CTBP1. Interacts with NCOR2 and AR. Interacts with FOXP2. Interacts with TBR1. Interacts with AURKA; this interaction facilitates the phosphorylation of FOXP1, which suppresses the expression of FBXL7. Interacts with ZMYM2. As to expression, isoform 5 is specifically expressed in embryonic stem cells. Highest expression in the lung, brain, and spleen. Lower expression in heart, skeletal muscle, kidney, small intestine (isoform 3 not present) and liver.

It is found in the nucleus. In terms of biological role, transcriptional repressor. Can act with CTBP1 to synergistically repress transcription but CTPBP1 is not essential. Plays an important role in the specification and differentiation of lung epithelium. Acts cooperatively with FOXP4 to regulate lung secretory epithelial cell fate and regeneration by restricting the goblet cell lineage program; the function may involve regulation of AGR2. Essential transcriptional regulator of B-cell development. Involved in regulation of cardiac muscle cell proliferation. Involved in the columnar organization of spinal motor neurons. Promotes the formation of the lateral motor neuron column (LMC) and the preganglionic motor column (PGC) and is required for respective appropriate motor axon projections. The segment-appropriate generation of spinal cord motor columns requires cooperation with other Hox proteins. Can regulate PITX3 promoter activity; may promote midbrain identity in embryonic stem cell-derived dopamine neurons by regulating PITX3. Negatively regulates the differentiation of T follicular helper cells T(FH)s. Involved in maintenance of hair follicle stem cell quiescence; the function probably involves regulation of FGF18. Represses transcription of various pro-apoptotic genes and cooperates with NF-kappa B-signaling in promoting B-cell expansion by inhibition of caspase-dependent apoptosis. Binds to CSF1R promoter elements and is involved in regulation of monocyte differentiation and macrophage functions; repression of CSF1R in monocytes seems to involve NCOR2 as corepressor. Involved in endothelial cell proliferation, tube formation and migration indicative for a role in angiogenesis; the role in neovascularization seems to implicate suppression of SEMA5B. Can negatively regulate androgen receptor signaling. Acts as a transcriptional activator of the FBXL7 promoter; this activity is regulated by AURKA. Functionally, involved in transcriptional regulation in embryonic stem cells (ESCs). Stimulates expression of transcription factors that are required for pluripotency and decreases expression of differentiation-associated genes. Has distinct DNA-binding specifities as compared to the canonical form and preferentially binds DNA with the sequence 5'-CGATACAA-3' (or closely related sequences). Promotes ESC self-renewal and pluripotency. The protein is Forkhead box protein P1 (Foxp1) of Mus musculus (Mouse).